A 154-amino-acid polypeptide reads, in one-letter code: Myoglobin (154 aa).

One can recognise a Globin domain in the interval 2 to 148 (GLSDQEWQQV…FRNDMASKYK (147 aa)). His-65 contributes to the nitrite binding site. Residue His-65 coordinates O2. His-94 provides a ligand contact to heme b.

The protein belongs to the globin family. In terms of assembly, monomeric.

It localises to the cytoplasm. The protein resides in the sarcoplasm. The catalysed reaction is Fe(III)-heme b-[protein] + nitric oxide + H2O = Fe(II)-heme b-[protein] + nitrite + 2 H(+). It catalyses the reaction H2O2 + AH2 = A + 2 H2O. Functionally, monomeric heme protein which primary function is to store oxygen and facilitate its diffusion within muscle tissues. Reversibly binds oxygen through a pentacoordinated heme iron and enables its timely and efficient release as needed during periods of heightened demand. Depending on the oxidative conditions of tissues and cells, and in addition to its ability to bind oxygen, it also has a nitrite reductase activity whereby it regulates the production of bioactive nitric oxide. Under stress conditions, like hypoxia and anoxia, it also protects cells against reactive oxygen species thanks to its pseudoperoxidase activity. This is Myoglobin (MB) from Anas poecilorhyncha (Indian spot-billed duck).